A 70-amino-acid polypeptide reads, in one-letter code: DNA-directed RNA polymerase subunit epsilon (70 aa).

The protein belongs to the RNA polymerase subunit epsilon family. RNAP is composed of a core of 2 alpha, a beta and a beta' subunit. The core is associated with a delta subunit, and at least one of epsilon or omega. When a sigma factor is associated with the core the holoenzyme is formed, which can initiate transcription.

It carries out the reaction RNA(n) + a ribonucleoside 5'-triphosphate = RNA(n+1) + diphosphate. Its function is as follows. A non-essential component of RNA polymerase (RNAP). In Enterococcus faecalis (strain ATCC 700802 / V583), this protein is DNA-directed RNA polymerase subunit epsilon.